Reading from the N-terminus, the 363-residue chain is Peroxin-36 (363 aa).

Residues 1-193 are Cytoplasmic-facing; it reads MSNLEKQIRL…ESFFINSFEQ (193 aa). Disordered regions lie at residues 71 to 114 and 128 to 157; these read QNHQ…DTST and TNSN…SKSG. The span at 97–114 shows a compositional bias: low complexity; the sequence is VDSNSDSSSSETLIDTST. Residues 194-213 form a helical membrane-spanning segment; that stretch reads LIALFDNFYFLSSLIGFNTS. The Peroxisomal segment spans residues 214–232; the sequence is NSNSKITRLLRNFIKQASK. Residues 233-250 form a helical membrane-spanning segment; that stretch reads IWLVIIFLTVKNLFIRMI. At 251–363 the chain is on the cytoplasmic side; it reads KLNRTEKKVK…SSDDIIDEYA (113 aa).

The protein localises to the peroxisome membrane. Functionally, controls peroxisome morphology and abundance under conditions of peroxisome proliferation such as oleate and methanol media. Has additional function(s), which is not present in its functional homologs such as Saccharomyces cerevisea PEX34 or human PEX16. The sequence is that of Peroxin-36 from Komagataella phaffii (strain GS115 / ATCC 20864) (Yeast).